A 438-amino-acid polypeptide reads, in one-letter code: Adenylyltransferase and sulfurtransferase MOCS3 (438 aa).

ATP contacts are provided by residues G80, D101, 108–112 (TNLHR), K125, and 169–170 (DN). Zn(2+)-binding residues include C210 and C213. The active-site Glycyl thioester intermediate; for adenylyltransferase activity is C227. Residues C285 and C288 each coordinate Zn(2+). Residues 335-436 (SKQRHVLVDV…WTRNVDKEFP (102 aa)) form the Rhodanese domain. The Cysteine persulfide intermediate; for sulfurtransferase activity role is filled by C392.

In the N-terminal section; belongs to the HesA/MoeB/ThiF family. UBA4 subfamily. Zn(2+) is required as a cofactor.

The protein localises to the cytoplasm. It is found in the cytosol. It catalyses the reaction [molybdopterin-synthase sulfur-carrier protein]-C-terminal Gly-Gly + ATP + H(+) = [molybdopterin-synthase sulfur-carrier protein]-C-terminal Gly-Gly-AMP + diphosphate. It carries out the reaction [molybdopterin-synthase sulfur-carrier protein]-C-terminal Gly-Gly-AMP + S-sulfanyl-L-cysteinyl-[cysteine desulfurase] + AH2 = [molybdopterin-synthase sulfur-carrier protein]-C-terminal-Gly-aminoethanethioate + L-cysteinyl-[cysteine desulfurase] + A + AMP + 2 H(+). It functions in the pathway tRNA modification; 5-methoxycarbonylmethyl-2-thiouridine-tRNA biosynthesis. Its pathway is cofactor biosynthesis; molybdopterin biosynthesis. Its function is as follows. Plays a central role in 2-thiolation of mcm(5)S(2)U at tRNA wobble positions of cytosolic tRNA(Lys), tRNA(Glu) and tRNA(Gln). Also essential during biosynthesis of the molybdenum cofactor. Acts by mediating the C-terminal thiocarboxylation of sulfur carriers URM1 and MOCS2A. Its N-terminus first activates URM1 and MOCS2A as acyl-adenylates (-COAMP), then the persulfide sulfur on the catalytic cysteine is transferred to URM1 and MOCS2A to form thiocarboxylation (-COSH) of their C-terminus. The reaction probably involves hydrogen sulfide that is generated from the persulfide intermediate and that acts as a nucleophile towards URM1 and MOCS2A. Subsequently, a transient disulfide bond is formed. Does not use thiosulfate as sulfur donor; NFS1 probably acting as a sulfur donor for thiocarboxylation reactions. The chain is Adenylyltransferase and sulfurtransferase MOCS3 from Culex quinquefasciatus (Southern house mosquito).